The following is a 177-amino-acid chain: ATP synthase subunit delta (177 aa).

Belongs to the ATPase delta chain family. As to quaternary structure, F-type ATPases have 2 components, F(1) - the catalytic core - and F(0) - the membrane proton channel. F(1) has five subunits: alpha(3), beta(3), gamma(1), delta(1), epsilon(1). F(0) has three main subunits: a(1), b(2) and c(10-14). The alpha and beta chains form an alternating ring which encloses part of the gamma chain. F(1) is attached to F(0) by a central stalk formed by the gamma and epsilon chains, while a peripheral stalk is formed by the delta and b chains.

It is found in the cell inner membrane. Functionally, f(1)F(0) ATP synthase produces ATP from ADP in the presence of a proton or sodium gradient. F-type ATPases consist of two structural domains, F(1) containing the extramembraneous catalytic core and F(0) containing the membrane proton channel, linked together by a central stalk and a peripheral stalk. During catalysis, ATP synthesis in the catalytic domain of F(1) is coupled via a rotary mechanism of the central stalk subunits to proton translocation. Its function is as follows. This protein is part of the stalk that links CF(0) to CF(1). It either transmits conformational changes from CF(0) to CF(1) or is implicated in proton conduction. This Klebsiella pneumoniae subsp. pneumoniae (strain ATCC 700721 / MGH 78578) protein is ATP synthase subunit delta.